A 278-amino-acid polypeptide reads, in one-letter code: Pantothenate synthetase (278 aa).

28 to 35 (MGNLHAGH) is an ATP binding site. Histidine 35 acts as the Proton donor in catalysis. Glutamine 59 serves as a coordination point for (R)-pantoate. Glutamine 59 contacts beta-alanine. Residue 145–148 (GKKD) participates in ATP binding. Glutamine 151 contacts (R)-pantoate. 182 to 185 (LSSR) contributes to the ATP binding site.

This sequence belongs to the pantothenate synthetase family. Homodimer.

It is found in the cytoplasm. The catalysed reaction is (R)-pantoate + beta-alanine + ATP = (R)-pantothenate + AMP + diphosphate + H(+). The protein operates within cofactor biosynthesis; (R)-pantothenate biosynthesis; (R)-pantothenate from (R)-pantoate and beta-alanine: step 1/1. Catalyzes the condensation of pantoate with beta-alanine in an ATP-dependent reaction via a pantoyl-adenylate intermediate. In Methylobacillus flagellatus (strain ATCC 51484 / DSM 6875 / VKM B-1610 / KT), this protein is Pantothenate synthetase.